The chain runs to 174 residues: Photosystem I assembly protein Ycf4 (174 aa).

The next 2 helical transmembrane spans lie at 11–31 and 56–76; these read LSNI…FLNG and IILM…CLTI.

The protein belongs to the Ycf4 family.

The protein resides in the plastid. Its subcellular location is the chloroplast thylakoid membrane. Seems to be required for the assembly of the photosystem I complex. This chain is Photosystem I assembly protein Ycf4, found in Emiliania huxleyi (Coccolithophore).